A 436-amino-acid chain; its full sequence is NAD(P)-dependent benzaldehyde dehydrogenase (436 aa).

NADP(+) contacts are provided by residues 117–119 (GPF), 143–147 (KPSET), 175–178 (RDEN), 193–194 (GS), 215–216 (EL), Cys249, and 337–339 (ELF). Active-site residues include Glu215 and Cys249.

It belongs to the aldehyde dehydrogenase family.

It carries out the reaction benzaldehyde + NAD(+) + H2O = benzoate + NADH + 2 H(+). The catalysed reaction is benzaldehyde + NADP(+) + H2O = benzoate + NADPH + 2 H(+). It participates in aromatic compound metabolism; (R)-mandelate degradation; benzoate from (R)-mandelate: step 4/4. Functionally, NAD or NADP-dependent benzaldehyde dehydrogenase that catalyzes the conversion of benzaldehyde into benzoate in the (R)-mandelate degradation pathway. The sequence is that of NAD(P)-dependent benzaldehyde dehydrogenase (mdlD) from Pseudomonas putida (Arthrobacter siderocapsulatus).